The primary structure comprises 319 residues: Acetylglutamate kinase (319 aa).

Substrate is bound by residues 74–75 (GG), Arg-96, and Asn-210.

It belongs to the acetylglutamate kinase family. ArgB subfamily.

The protein localises to the cytoplasm. It carries out the reaction N-acetyl-L-glutamate + ATP = N-acetyl-L-glutamyl 5-phosphate + ADP. It participates in amino-acid biosynthesis; L-arginine biosynthesis; N(2)-acetyl-L-ornithine from L-glutamate: step 2/4. In terms of biological role, catalyzes the ATP-dependent phosphorylation of N-acetyl-L-glutamate. In Pseudarthrobacter chlorophenolicus (strain ATCC 700700 / DSM 12829 / CIP 107037 / JCM 12360 / KCTC 9906 / NCIMB 13794 / A6) (Arthrobacter chlorophenolicus), this protein is Acetylglutamate kinase.